The following is a 41-amino-acid chain: Large ribosomal subunit protein bL36 (41 aa).

It belongs to the bacterial ribosomal protein bL36 family.

The chain is Large ribosomal subunit protein bL36 from Sinorhizobium fredii (strain NBRC 101917 / NGR234).